The primary structure comprises 226 residues: ATP synthase F(0) complex subunit a (226 aa).

6 helical membrane passes run 12-32 (PTVLGLPAAILVILFPPLLVP), 68-88 (WSLMLTSLIIFIASTNLLGLF), 97-117 (QLSMNLAMAIPLWASTVAMGL), 138-158 (IPMLIIIETISLFIQPLALAV), 164-184 (ITAGHLLMHLIGSATLTMLTI), and 189-209 (TLITLTILTLLTILEIAVALI).

The protein belongs to the ATPase A chain family. Component of the ATP synthase complex composed at least of ATP5F1A/subunit alpha, ATP5F1B/subunit beta, ATP5MC1/subunit c (homooctomer), MT-ATP6/subunit a, MT-ATP8/subunit 8, ATP5ME/subunit e, ATP5MF/subunit f, ATP5MG/subunit g, ATP5MK/subunit k, ATP5MJ/subunit j, ATP5F1C/subunit gamma, ATP5F1D/subunit delta, ATP5F1E/subunit epsilon, ATP5PF/subunit F6, ATP5PB/subunit b, ATP5PD/subunit d, ATP5PO/subunit OSCP. ATP synthase complex consists of a soluble F(1) head domain (subunits alpha(3) and beta(3)) - the catalytic core - and a membrane F(0) domain - the membrane proton channel (subunits c, a, 8, e, f, g, k and j). These two domains are linked by a central stalk (subunits gamma, delta, and epsilon) rotating inside the F1 region and a stationary peripheral stalk (subunits F6, b, d, and OSCP). Interacts with DNAJC30; interaction is direct.

The protein localises to the mitochondrion inner membrane. It carries out the reaction H(+)(in) = H(+)(out). Its function is as follows. Subunit a, of the mitochondrial membrane ATP synthase complex (F(1)F(0) ATP synthase or Complex V) that produces ATP from ADP in the presence of a proton gradient across the membrane which is generated by electron transport complexes of the respiratory chain. ATP synthase complex consist of a soluble F(1) head domain - the catalytic core - and a membrane F(1) domain - the membrane proton channel. These two domains are linked by a central stalk rotating inside the F(1) region and a stationary peripheral stalk. During catalysis, ATP synthesis in the catalytic domain of F(1) is coupled via a rotary mechanism of the central stalk subunits to proton translocation. With the subunit c (ATP5MC1), forms the proton-conducting channel in the F(0) domain, that contains two crucial half-channels (inlet and outlet) that facilitate proton movement from the mitochondrial intermembrane space (IMS) into the matrix. Protons are taken up via the inlet half-channel and released through the outlet half-channel, following a Grotthuss mechanism. The polypeptide is ATP synthase F(0) complex subunit a (Pongo pygmaeus (Bornean orangutan)).